The following is a 220-amino-acid chain: Protein-L-isoaspartate O-methyltransferase (220 aa).

S68 is an active-site residue.

It belongs to the methyltransferase superfamily. L-isoaspartyl/D-aspartyl protein methyltransferase family.

It localises to the cytoplasm. The enzyme catalyses [protein]-L-isoaspartate + S-adenosyl-L-methionine = [protein]-L-isoaspartate alpha-methyl ester + S-adenosyl-L-homocysteine. In terms of biological role, catalyzes the methyl esterification of L-isoaspartyl residues in peptides and proteins that result from spontaneous decomposition of normal L-aspartyl and L-asparaginyl residues. It plays a role in the repair and/or degradation of damaged proteins. The polypeptide is Protein-L-isoaspartate O-methyltransferase (Dictyoglomus thermophilum (strain ATCC 35947 / DSM 3960 / H-6-12)).